Here is a 197-residue protein sequence, read N- to C-terminus: Na(+)-translocating NADH-quinone reductase subunit E (197 aa).

6 helical membrane passes run 11-31 (SVFIENMALSFFLGMCTFLAV), 35-55 (VSTAFGLGVAVIFVLGLSVPA), 76-96 (FLKFITFIGVIAALVQILEMF), 108-128 (LGIYLPLITVNCAIFGAVSFM), 139-159 (VVYGFGAGLGWMLAIVALAGI), and 175-195 (LGITFIAAGLMAMAFMSFSGI).

The protein belongs to the NqrDE/RnfAE family. In terms of assembly, composed of six subunits; NqrA, NqrB, NqrC, NqrD, NqrE and NqrF.

The protein resides in the cell inner membrane. The catalysed reaction is a ubiquinone + n Na(+)(in) + NADH + H(+) = a ubiquinol + n Na(+)(out) + NAD(+). In terms of biological role, NQR complex catalyzes the reduction of ubiquinone-1 to ubiquinol by two successive reactions, coupled with the transport of Na(+) ions from the cytoplasm to the periplasm. NqrA to NqrE are probably involved in the second step, the conversion of ubisemiquinone to ubiquinol. This is Na(+)-translocating NADH-quinone reductase subunit E from Neisseria gonorrhoeae (strain ATCC 700825 / FA 1090).